The primary structure comprises 637 residues: MSNWSIKDAYVGYNVNYWSSGLYGISEAGEVTVSPDPNHPEHTIGLNELAKDMVKSGVALPVLVRFPQILHHRVNSLCNAFNQAITRYDYQSDYLLVYPIKVNQQQTVVEEILASQVSKEVPQLGLEAGSKPELMAVLAMAQKASSVIICNGYKDVEYIRLALIGEKLGHQVYIVLEKLSELKVVLEEAKKLGVTPRLGLRVRLAFQGKGKWQASGGEKSKFGLSAAQVLNVINSLKDEDMLDSLQLLHFHLGSQIANIRDIRSGVSEAGRFYCELQKMGANVKCFDVGGGLAVDYDGTRSQSSNSMNYGLTEYANNIVSVLNDMCREHDQPMPRLISESGRYLTAHHAVLITDVIGTEAYKPEDLQAPDEEAPQQLKNMWDSWGEVSGRADQRALIEIYHDVQSDLAEVHSLFALGQMSLSDRAWAEQMNLRVCYELKGVMSGKYRFHRPVIDELNEKLADKFFVNFSLFQSLPDAWGIDQVFPVMPLSGLDKKPERRAVMLDITCDSDGTVDQYVDGQGIETTLPVPAWSAESPYLIGFFLVGAYQEILGDMHNLFGDTNSAVVRLDDDGLVNIESVLAGDTVADVLRYVNLDAVSFMRTYEELVNLHIQEDERANILEELQIGLKGYTYLEDFS.

Residue Lys-101 is modified to N6-(pyridoxal phosphate)lysine. A substrate-binding site is contributed by 286–296 (FDVGGGLAVDY).

It belongs to the Orn/Lys/Arg decarboxylase class-II family. SpeA subfamily. It depends on Mg(2+) as a cofactor. The cofactor is pyridoxal 5'-phosphate.

It catalyses the reaction L-arginine + H(+) = agmatine + CO2. It functions in the pathway amine and polyamine biosynthesis; agmatine biosynthesis; agmatine from L-arginine: step 1/1. Functionally, catalyzes the biosynthesis of agmatine from arginine. The sequence is that of Biosynthetic arginine decarboxylase from Shewanella loihica (strain ATCC BAA-1088 / PV-4).